The following is a 251-amino-acid chain: NADH-quinone oxidoreductase subunit B (251 aa).

Cys38, Cys39, Cys104, and Cys134 together coordinate [4Fe-4S] cluster. The tract at residues 208–251 (RKGLPPGSMTDVGWIPPEARERLKAGRGAGASGSGEREEGKEGA) is disordered. Residues 242-251 (GEREEGKEGA) are compositionally biased toward basic and acidic residues.

Belongs to the complex I 20 kDa subunit family. NDH-1 is composed of 14 different subunits. Subunits NuoB, C, D, E, F, and G constitute the peripheral sector of the complex. Requires [4Fe-4S] cluster as cofactor.

It is found in the cell membrane. It catalyses the reaction a quinone + NADH + 5 H(+)(in) = a quinol + NAD(+) + 4 H(+)(out). NDH-1 shuttles electrons from NADH, via FMN and iron-sulfur (Fe-S) centers, to quinones in the respiratory chain. The immediate electron acceptor for the enzyme in this species is believed to be a menaquinone. Couples the redox reaction to proton translocation (for every two electrons transferred, four hydrogen ions are translocated across the cytoplasmic membrane), and thus conserves the redox energy in a proton gradient. This Rubrobacter xylanophilus (strain DSM 9941 / JCM 11954 / NBRC 16129 / PRD-1) protein is NADH-quinone oxidoreductase subunit B.